The sequence spans 178 residues: Translation initiation factor IF-3 (178 aa).

It belongs to the IF-3 family. In terms of assembly, monomer.

The protein localises to the cytoplasm. IF-3 binds to the 30S ribosomal subunit and shifts the equilibrium between 70S ribosomes and their 50S and 30S subunits in favor of the free subunits, thus enhancing the availability of 30S subunits on which protein synthesis initiation begins. The chain is Translation initiation factor IF-3 from Macrococcus caseolyticus (strain JCSC5402) (Macrococcoides caseolyticum).